A 202-amino-acid chain; its full sequence is AFG2-interacting ribosome maturation factor (202 aa).

Part of the 55LCC heterohexameric ATPase complex. Does not associate with pre-60S ribosomal particles.

The protein localises to the nucleus. It is found in the cytoplasm. Its function is as follows. Part of the 55LCC heterohexameric ATPase complex which is chromatin-associated and promotes replisome proteostasis to maintain replication fork progression and genome stability. Required for replication fork progression, sister chromatid cohesion, and chromosome stability. The ATPase activity is specifically enhanced by replication fork DNA and is coupled to cysteine protease-dependent cleavage of replisome substrates in response to replication fork damage. Uses ATPase activity to process replisome substrates in S-phase, facilitating their proteolytic turnover from chromatin to ensure DNA replication and mitotic fidelity. Involved in the cytoplasmic maturation steps of pre-60S ribosomal particles by promoting the release of shuttling protein RSL24D1/RLP24 from the pre-ribosomal particles. Plays an essential role in early embryonic development. This chain is AFG2-interacting ribosome maturation factor (airim), found in Danio rerio (Zebrafish).